The primary structure comprises 486 residues: Membrane-bound lytic murein transglycosylase F (486 aa).

An N-terminal signal peptide occupies residues 1–21 (MTRIKLSYFTIGLVALLLALA). The segment at 22-268 (LWPNIPWRNG…RLEEKYLGHV (247 aa)) is non-LT domain. An LT domain region spans residues 269 to 486 (GSFDYVDTKT…VVGPGWSIGD (218 aa)). Residue glutamate 313 is part of the active site.

In the N-terminal section; belongs to the bacterial solute-binding protein 3 family. The protein in the C-terminal section; belongs to the transglycosylase Slt family.

It localises to the cell outer membrane. The catalysed reaction is Exolytic cleavage of the (1-&gt;4)-beta-glycosidic linkage between N-acetylmuramic acid (MurNAc) and N-acetylglucosamine (GlcNAc) residues in peptidoglycan, from either the reducing or the non-reducing ends of the peptidoglycan chains, with concomitant formation of a 1,6-anhydrobond in the MurNAc residue.. Murein-degrading enzyme that degrades murein glycan strands and insoluble, high-molecular weight murein sacculi, with the concomitant formation of a 1,6-anhydromuramoyl product. Lytic transglycosylases (LTs) play an integral role in the metabolism of the peptidoglycan (PG) sacculus. Their lytic action creates space within the PG sacculus to allow for its expansion as well as for the insertion of various structures such as secretion systems and flagella. This chain is Membrane-bound lytic murein transglycosylase F, found in Yersinia pseudotuberculosis serotype I (strain IP32953).